Reading from the N-terminus, the 584-residue chain is Transcription factor COE1 (584 aa).

Methionine 1 bears the N-acetylmethionine mark. A compositionally biased stretch (polar residues) spans 1–14; the sequence is MFGIQESIQRSGSS. A disordered region spans residues 1-21; it reads MFGIQESIQRSGSSMKEEPLG. Lysine 16 is covalently cross-linked (Glycyl lysine isopeptide (Lys-Gly) (interchain with G-Cter in SUMO1); alternate). A Glycyl lysine isopeptide (Lys-Gly) (interchain with G-Cter in SUMO2); alternate cross-link involves residue lysine 16. Residues 63 to 66 are interaction with DNA; that stretch reads RKSN. Residues 151–170 form a C5-type zinc finger; it reads CRVLLTHEIMCSRCCDKKSC. 2 interaction with DNA regions span residues 197-204 and 236-239; these read NCLKNAGN and NNSK. The region spanning 255–338 is the IPT/TIG domain; it reads PCIKAISPSE…KGTPGRFIYT (84 aa). Residues 450-473 form a disordered region; that stretch reads GFTRNSSSVSPHGYVPSTTPQQTN.

The protein belongs to the COE family. In terms of assembly, homodimer. Interacts with ZNF423 and ZNF521, leading to prevent EBF1 to bind DNA and activate target genes. Interacts with CCR4-NOT component CNOT3. As to expression, expressed exclusively in olfactory receptor neurons and their precursors.

The protein resides in the nucleus. Its function is as follows. Key pioneer transcription factor of B-cell specification and commitment. Recognizes variations of the palindromic sequence 5'-ATTCCCNNGGGAATT-3'. Operates in a transcription factor network to activate B-cell-specific genes and repress genes associated with alternative cell fates. For instance, positively regulates many B-cell specific genes including BCR or CD40 while repressing genes that direct cells into alternative lineages, including GATA3 and TCF7 for the T-cell lineage. In addition to its role during lymphopoiesis, controls the thermogenic gene program in adipocytes during development and in response to environmental cold. The sequence is that of Transcription factor COE1 (Ebf1) from Rattus norvegicus (Rat).